The following is a 162-amino-acid chain: Transcriptional repressor NrdR (162 aa).

The segment at Cys-3–Cys-34 is a zinc-finger region. The ATP-cone domain maps to Ile-49–Asp-139.

The protein belongs to the NrdR family. Zn(2+) is required as a cofactor.

Negatively regulates transcription of bacterial ribonucleotide reductase nrd genes and operons by binding to NrdR-boxes. The sequence is that of Transcriptional repressor NrdR from Thermosynechococcus vestitus (strain NIES-2133 / IAM M-273 / BP-1).